A 450-amino-acid polypeptide reads, in one-letter code: D-inositol 3-phosphate glycosyltransferase (450 aa).

H26 is a 1D-myo-inositol 3-phosphate binding site. UDP-N-acetyl-alpha-D-glucosamine contacts are provided by residues 32–33 and G40; that span reads QP. 1D-myo-inositol 3-phosphate-binding positions include 37–42, K95, Y128, T152, and R172; that span reads DAGGMN. R246, K251, and Q313 together coordinate UDP-N-acetyl-alpha-D-glucosamine. Mg(2+) contacts are provided by Y322, R323, and A325. Residues E335 and E343 each contribute to the UDP-N-acetyl-alpha-D-glucosamine site. T349 serves as a coordination point for Mg(2+).

This sequence belongs to the glycosyltransferase group 1 family. MshA subfamily. In terms of assembly, homodimer.

It carries out the reaction 1D-myo-inositol 3-phosphate + UDP-N-acetyl-alpha-D-glucosamine = 1D-myo-inositol 2-acetamido-2-deoxy-alpha-D-glucopyranoside 3-phosphate + UDP + H(+). Catalyzes the transfer of a N-acetyl-glucosamine moiety to 1D-myo-inositol 3-phosphate to produce 1D-myo-inositol 2-acetamido-2-deoxy-glucopyranoside 3-phosphate in the mycothiol biosynthesis pathway. This Mycolicibacterium vanbaalenii (strain DSM 7251 / JCM 13017 / BCRC 16820 / KCTC 9966 / NRRL B-24157 / PYR-1) (Mycobacterium vanbaalenii) protein is D-inositol 3-phosphate glycosyltransferase.